The following is a 596-amino-acid chain: Protein FlbA (596 aa).

TPR repeat units lie at residues 91–124 (GLAW…LPDH), 159–192 (VEGA…NPEA), 193–226 (AVLW…APDF), and 228–260 (KAYH…PGSP).

This Caulobacter vibrioides (strain ATCC 19089 / CIP 103742 / CB 15) (Caulobacter crescentus) protein is Protein FlbA (flbA).